The following is a 347-amino-acid chain: Beta-hexosaminidase (347 aa).

Substrate is bound by residues Asp-62, Arg-70, Arg-134, and 164–165 (KH). His-177 serves as the catalytic Proton donor/acceptor. Catalysis depends on Asp-249, which acts as the Nucleophile.

This sequence belongs to the glycosyl hydrolase 3 family. NagZ subfamily.

It is found in the cytoplasm. It catalyses the reaction Hydrolysis of terminal non-reducing N-acetyl-D-hexosamine residues in N-acetyl-beta-D-hexosaminides.. It participates in cell wall biogenesis; peptidoglycan recycling. In terms of biological role, plays a role in peptidoglycan recycling by cleaving the terminal beta-1,4-linked N-acetylglucosamine (GlcNAc) from peptide-linked peptidoglycan fragments, giving rise to free GlcNAc, anhydro-N-acetylmuramic acid and anhydro-N-acetylmuramic acid-linked peptides. The chain is Beta-hexosaminidase from Mannheimia succiniciproducens (strain KCTC 0769BP / MBEL55E).